A 330-amino-acid polypeptide reads, in one-letter code: Lipoyl synthase (330 aa).

Cys-77, Cys-82, Cys-88, Cys-103, Cys-107, Cys-110, and Ser-317 together coordinate [4Fe-4S] cluster. A Radical SAM core domain is found at 89 to 306; the sequence is FNHGTATFMI…RSEAERMGFE (218 aa).

It belongs to the radical SAM superfamily. Lipoyl synthase family. It depends on [4Fe-4S] cluster as a cofactor.

The protein localises to the cytoplasm. The catalysed reaction is [[Fe-S] cluster scaffold protein carrying a second [4Fe-4S](2+) cluster] + N(6)-octanoyl-L-lysyl-[protein] + 2 oxidized [2Fe-2S]-[ferredoxin] + 2 S-adenosyl-L-methionine + 4 H(+) = [[Fe-S] cluster scaffold protein] + N(6)-[(R)-dihydrolipoyl]-L-lysyl-[protein] + 4 Fe(3+) + 2 hydrogen sulfide + 2 5'-deoxyadenosine + 2 L-methionine + 2 reduced [2Fe-2S]-[ferredoxin]. Its pathway is protein modification; protein lipoylation via endogenous pathway; protein N(6)-(lipoyl)lysine from octanoyl-[acyl-carrier-protein]: step 2/2. Its function is as follows. Catalyzes the radical-mediated insertion of two sulfur atoms into the C-6 and C-8 positions of the octanoyl moiety bound to the lipoyl domains of lipoate-dependent enzymes, thereby converting the octanoylated domains into lipoylated derivatives. This is Lipoyl synthase from Actinobacillus pleuropneumoniae serotype 3 (strain JL03).